We begin with the raw amino-acid sequence, 216 residues long: Imidazole glycerol phosphate synthase subunit HisH (216 aa).

A Glutamine amidotransferase type-1 domain is found at 2–216; the sequence is RVAIIDYGSG…LISNFLRWKP (215 aa). The Nucleophile role is filled by Cys-88. Catalysis depends on residues His-196 and Glu-198.

Heterodimer of HisH and HisF.

It is found in the cytoplasm. It catalyses the reaction 5-[(5-phospho-1-deoxy-D-ribulos-1-ylimino)methylamino]-1-(5-phospho-beta-D-ribosyl)imidazole-4-carboxamide + L-glutamine = D-erythro-1-(imidazol-4-yl)glycerol 3-phosphate + 5-amino-1-(5-phospho-beta-D-ribosyl)imidazole-4-carboxamide + L-glutamate + H(+). It carries out the reaction L-glutamine + H2O = L-glutamate + NH4(+). The protein operates within amino-acid biosynthesis; L-histidine biosynthesis; L-histidine from 5-phospho-alpha-D-ribose 1-diphosphate: step 5/9. Functionally, IGPS catalyzes the conversion of PRFAR and glutamine to IGP, AICAR and glutamate. The HisH subunit catalyzes the hydrolysis of glutamine to glutamate and ammonia as part of the synthesis of IGP and AICAR. The resulting ammonia molecule is channeled to the active site of HisF. The protein is Imidazole glycerol phosphate synthase subunit HisH of Agrobacterium fabrum (strain C58 / ATCC 33970) (Agrobacterium tumefaciens (strain C58)).